A 166-amino-acid polypeptide reads, in one-letter code: Sec-independent protein translocase protein TatB (166 aa).

Residues 2–22 (FDGIGFMELLLIGVLGLVVLG) traverse the membrane as a helical segment. The interval 69–166 (SKGLSNLSPE…DTRSNPKANG (98 aa)) is disordered. Composition is skewed to polar residues over residues 88–97 (QAAQSVNRPY) and 112–132 (QIYS…SQAN). The span at 133–153 (PTATVEASPAPASPATPSEPS) shows a compositional bias: low complexity. Over residues 155–166 (GADTRSNPKANG) the composition is skewed to polar residues.

Belongs to the TatB family. As to quaternary structure, the Tat system comprises two distinct complexes: a TatABC complex, containing multiple copies of TatA, TatB and TatC subunits, and a separate TatA complex, containing only TatA subunits. Substrates initially bind to the TatABC complex, which probably triggers association of the separate TatA complex to form the active translocon.

It is found in the cell inner membrane. Part of the twin-arginine translocation (Tat) system that transports large folded proteins containing a characteristic twin-arginine motif in their signal peptide across membranes. Together with TatC, TatB is part of a receptor directly interacting with Tat signal peptides. TatB may form an oligomeric binding site that transiently accommodates folded Tat precursor proteins before their translocation. This chain is Sec-independent protein translocase protein TatB, found in Shewanella baltica (strain OS155 / ATCC BAA-1091).